The primary structure comprises 506 residues: Maturase K (506 aa).

This sequence belongs to the intron maturase 2 family. MatK subfamily.

The protein localises to the plastid. Its subcellular location is the chloroplast. Usually encoded in the trnK tRNA gene intron. Probably assists in splicing its own and other chloroplast group II introns. In Wisteria frutescens (American wisteria), this protein is Maturase K.